A 354-amino-acid polypeptide reads, in one-letter code: Petrobactin import system permease protein FatC (354 aa).

Transmembrane regions (helical) follow at residues 37–57 (YWIV…GLLV), 77–97 (IVAI…TVAF), 116–136 (LYSA…LINF), 141–161 (SFLF…GWLL), 168–188 (LQLM…VSTF), 214–234 (PAYF…IFAH), 259–279 (VIYT…LIGP), 302–322 (YIFP…YFLM), and 329–349 (QGVV…TIVL).

The protein belongs to the binding-protein-dependent transport system permease family. FecCD subfamily. In terms of assembly, the complex is composed of two ATP-binding proteins (FatE), two transmembrane proteins (FatC and FatD) and a solute-binding protein (FpuA).

The protein localises to the cell membrane. Its function is as follows. Part of an ABC transporter complex involved in ferric-petrobactin uptake. Probably responsible for the translocation of the substrate across the membrane. In Bacillus anthracis, this protein is Petrobactin import system permease protein FatC.